The sequence spans 72 residues: Alpha-elapitoxin-Dpp2d (72 aa).

5 cysteine pairs are disulfide-bonded: Cys-3–Cys-21, Cys-14–Cys-42, Cys-27–Cys-31, Cys-46–Cys-57, and Cys-58–Cys-63. Arg-72 is modified (arginine amide).

It belongs to the three-finger toxin family. Long-chain subfamily. Type II alpha-neurotoxin sub-subfamily. As to quaternary structure, monomer (predominant). In terms of processing, amidation does not significantly affect toxin selectivity, since the activity profile and binding data are reminiscent of classical long-chain 3-finger toxins with a free carboxyl termini. As to expression, expressed by the venom gland.

The protein resides in the secreted. Functionally, binds with high affinity to muscular (IC(50)=114 nM) and neuronal (alpha-7/CHRNA7) (IC(50)=58 nM) nicotinic acetylcholine receptor (nAChR) and inhibits acetylcholine from binding to the receptor, thereby impairing neuromuscular and neuronal transmission. Competitive radioligand binding assays also demonstrate that this toxin competes with epibatidine binding to the Lymnaea stagnalis acetylcholine-binding protein (Ls-AChBP) (IC(50)=4.9 nM). This Dendroaspis polylepis polylepis (Black mamba) protein is Alpha-elapitoxin-Dpp2d.